The following is a 394-amino-acid chain: Succinate--CoA ligase [ADP-forming] subunit beta 1 (394 aa).

In terms of domain architecture, ATP-grasp spans 9–237 (RDLFAKHDVP…KAAANPLEAA (229 aa)). Residues lysine 45, 52–54 (GRG), glutamate 92, proline 95, and glutamate 100 contribute to the ATP site. Residues asparagine 192 and aspartate 206 each coordinate Mg(2+). Residues asparagine 257 and 319-321 (GIT) each bind substrate.

Belongs to the succinate/malate CoA ligase beta subunit family. In terms of assembly, heterotetramer of two alpha and two beta subunits. Mg(2+) serves as cofactor.

The catalysed reaction is succinate + ATP + CoA = succinyl-CoA + ADP + phosphate. It catalyses the reaction GTP + succinate + CoA = succinyl-CoA + GDP + phosphate. Its pathway is carbohydrate metabolism; tricarboxylic acid cycle; succinate from succinyl-CoA (ligase route): step 1/1. Its function is as follows. Succinyl-CoA synthetase functions in the citric acid cycle (TCA), coupling the hydrolysis of succinyl-CoA to the synthesis of either ATP or GTP and thus represents the only step of substrate-level phosphorylation in the TCA. The beta subunit provides nucleotide specificity of the enzyme and binds the substrate succinate, while the binding sites for coenzyme A and phosphate are found in the alpha subunit. The sequence is that of Succinate--CoA ligase [ADP-forming] subunit beta 1 from Streptomyces coelicolor (strain ATCC BAA-471 / A3(2) / M145).